A 273-amino-acid polypeptide reads, in one-letter code: ATP synthase subunit delta (273 aa).

Residues 55–78 (TDPAQSARPRPSSPSVSSAPRSAA) form a disordered region. Positions 57–78 (PAQSARPRPSSPSVSSAPRSAA) are enriched in low complexity.

The protein belongs to the ATPase delta chain family. In terms of assembly, F-type ATPases have 2 components, F(1) - the catalytic core - and F(0) - the membrane proton channel. F(1) has five subunits: alpha(3), beta(3), gamma(1), delta(1), epsilon(1). F(0) has three main subunits: a(1), b(2) and c(10-14). The alpha and beta chains form an alternating ring which encloses part of the gamma chain. F(1) is attached to F(0) by a central stalk formed by the gamma and epsilon chains, while a peripheral stalk is formed by the delta and b chains.

Its subcellular location is the cell membrane. Functionally, f(1)F(0) ATP synthase produces ATP from ADP in the presence of a proton or sodium gradient. F-type ATPases consist of two structural domains, F(1) containing the extramembraneous catalytic core and F(0) containing the membrane proton channel, linked together by a central stalk and a peripheral stalk. During catalysis, ATP synthesis in the catalytic domain of F(1) is coupled via a rotary mechanism of the central stalk subunits to proton translocation. Its function is as follows. This protein is part of the stalk that links CF(0) to CF(1). It either transmits conformational changes from CF(0) to CF(1) or is implicated in proton conduction. The chain is ATP synthase subunit delta from Streptomyces lividans.